A 363-amino-acid chain; its full sequence is Protein CPn_1058/CP_0792/CPj1058/CpB1100 (363 aa).

The signal sequence occupies residues 1–27 (MKLYQTLRGIVLVSTGCIFLGMHGGYA).

It belongs to the chlamydial CPn_1058/CT_355/TC_0634 family.

The sequence is that of Protein CPn_1058/CP_0792/CPj1058/CpB1100 from Chlamydia pneumoniae (Chlamydophila pneumoniae).